We begin with the raw amino-acid sequence, 233 residues long: DNA-directed RNA polymerase I subunit RPA34 (233 aa).

Residues serine 10, serine 12, serine 14, and serine 60 each carry the phosphoserine modification. Positions 179–191 (DFHVAEEVKENKK) are enriched in basic and acidic residues. Residues 179 to 233 (DFHVAEEVKENKKEPKKRSHHDDEEESSEKKKKKKEKREKREKKDKKDKKKKHRD) are disordered. A compositionally biased stretch (basic residues) spans 208–233 (KKKKKKEKREKREKKDKKDKKKKHRD).

Belongs to the eukaryotic RPA34 RNA polymerase subunit family. In terms of assembly, component of the RNA polymerase I (Pol I) complex consisting of 14 subunits: RPA135, RPA190, RPC40, RPA14, RPB5, RPO26, RPA43, RPB8, RPA12, RPB10, RPC19, RPC10, RPA49 and RPA34. The complex is composed of a horseshoe-shaped core containing ten subunits (RPA135, RPA190, RPB5, RPO26, RPB8, RPB10, RPC10, RPA12, RPC19 and RPC40) where RPA135 and RPA190 form the DNA-binding cleft. Outside of the core, RPA14 and RPA43 form the stalk that mediates interactions with transcription initiation factors and newly synthesized RNA. Forms a TFIIF-like heterodimer with RPA49; the heterodimer formed by RPA34 and RPA49 can be dissociated from the Pol I core giving rise to a 12 subunit form A* of Pol I (formerly called pol A) that shows impaired transcript elongation activity and increased sensitivity to alpha-amanitin. The heterodimer formed by RPA34 and RPA49 stabilizes subunit RPA12 and stimulates RPA12-dependent RNA cleavage.

It is found in the nucleus. It localises to the nucleolus. Its function is as follows. DNA-dependent RNA polymerases catalyze the transcription of DNA into RNA using the four ribonucleoside triphosphates as substrates. Component of RNA polymerase I (Pol I) which synthesizes ribosomal RNA precursors. Besides, RNA polymerase I has intrinsic RNA cleavage activity. The heterodimer formed by RPA34 and RPA49 stimulates transcript elongation by Pol I. The sequence is that of DNA-directed RNA polymerase I subunit RPA34 (RPA34) from Saccharomyces cerevisiae (strain ATCC 204508 / S288c) (Baker's yeast).